The primary structure comprises 197 residues: UPF0200 protein MJ1399 (197 aa).

8–15 provides a ligand contact to ATP; that stretch reads GMPGAGKS.

This sequence belongs to the UPF0200 family.

The protein is UPF0200 protein MJ1399 of Methanocaldococcus jannaschii (strain ATCC 43067 / DSM 2661 / JAL-1 / JCM 10045 / NBRC 100440) (Methanococcus jannaschii).